A 598-amino-acid polypeptide reads, in one-letter code: 4-coumarate--CoA ligase-like 6 (598 aa).

ATP contacts are provided by serine 232, serine 233, glycine 234, threonine 235, threonine 236, and lysine 240. Arginine 318 provides a ligand contact to CoA. Residues 320 to 389 (DLAAAARAVE…TVFPSVQIVQ (70 aa)) are SBD1. Glycine 367, glutamine 389, and threonine 394 together coordinate (E)-4-coumaroyl-AMP. Glutamine 389, threonine 394, aspartate 475, and arginine 490 together coordinate ATP. Residues 390–454 (SYGLTESTGP…IRGPVVMKGY (65 aa)) are SBD2. The (E)-4-coumaroyl-AMP site is built by lysine 492 and lysine 496. CoA-binding residues include lysine 498 and glycine 499. Lysine 581 contributes to the ATP binding site.

Belongs to the ATP-dependent AMP-binding enzyme family. Requires Mg(2+) as cofactor.

It carries out the reaction (E)-4-coumarate + ATP + CoA = (E)-4-coumaroyl-CoA + AMP + diphosphate. The catalysed reaction is (E)-4-coumarate + ATP + H(+) = (E)-4-coumaroyl-AMP + diphosphate. It catalyses the reaction (E)-4-coumaroyl-AMP + CoA = (E)-4-coumaroyl-CoA + AMP + H(+). Carboxylate--CoA ligase that may use 4-coumarate as substrate. Follows a two-step reaction mechanism, wherein the carboxylate substrate first undergoes adenylation by ATP, followed by a thioesterification in the presence of CoA to yield the final CoA thioester. The sequence is that of 4-coumarate--CoA ligase-like 6 (4CLL6) from Oryza sativa subsp. japonica (Rice).